A 335-amino-acid polypeptide reads, in one-letter code: Nucleoid-associated protein YejK (335 aa).

The protein belongs to the YejK family.

The protein localises to the cytoplasm. It is found in the nucleoid. In Shigella flexneri, this protein is Nucleoid-associated protein YejK.